The chain runs to 328 residues: Malate dehydrogenase (328 aa).

Position 11–17 (11–17 (GAAGQIG)) interacts with NAD(+). Arginine 94 and arginine 100 together coordinate substrate. NAD(+) is bound by residues asparagine 107, glutamine 114, and 131–133 (VGN). Residues asparagine 133 and arginine 164 each coordinate substrate. Catalysis depends on histidine 189, which acts as the Proton acceptor.

The protein belongs to the LDH/MDH superfamily. MDH type 2 family.

The catalysed reaction is (S)-malate + NAD(+) = oxaloacetate + NADH + H(+). In terms of biological role, catalyzes the reversible oxidation of malate to oxaloacetate. This Xylella fastidiosa (strain M12) protein is Malate dehydrogenase.